The following is a 271-amino-acid chain: Calretinin (271 aa).

EF-hand domains are found at residues 16-51, 63-98, 107-142, 151-186, 195-230, and 235-270; these read LTAS…LEKA, NFGE…EENF, GSSA…LLKK, KLQE…QENF, LTSE…LYEK, and MNIQ…SEPP. Residues Asp29, Asp31, Asn33, Tyr35, Glu40, Asp76, Asn78, Asp80, Lys82, Glu87, Asp120, Asp122, Ser124, Tyr126, Glu131, Asp164, Asn166, Asp168, Lys170, Glu175, Asp208, Asp210, Ser212, Tyr214, and Glu219 each coordinate Ca(2+). Tyr214 bears the Phosphotyrosine mark.

Belongs to the calbindin family. Brain.

It localises to the synapse. It is found in the cell projection. The protein localises to the dendrite. Functionally, calcium-binding protein involved in calcium homeostasis and signal transduction. It plays a critical role in buffering intracellular calcium levels and modulating calcium-dependent signaling pathways. Predominantly expressed in specific neuronal populations, influences synaptic plasticity and neuronal excitability, contributing to learning and memory. During embryonic development, it facilitates neuronal differentiation and maturation. The chain is Calretinin from Homo sapiens (Human).